Reading from the N-terminus, the 477-residue chain is Sucrose-6-phosphate hydrolase (477 aa).

Substrate-binding positions include 36–39, Gln-55, Trp-63, 98–99, 160–161, Glu-215, and Trp-298; these read WMND, FS, and RD. The active site involves Asp-39.

The protein belongs to the glycosyl hydrolase 32 family.

The protein localises to the cytoplasm. The catalysed reaction is Hydrolysis of terminal non-reducing beta-D-fructofuranoside residues in beta-D-fructofuranosides.. It functions in the pathway glycan biosynthesis; sucrose metabolism. Its function is as follows. Enables the bacterium to metabolize sucrose as a sole carbon source. The protein is Sucrose-6-phosphate hydrolase (cscA) of Escherichia coli.